The primary structure comprises 361 residues: Serine/threonine-protein kinase SAPK9 (361 aa).

The Protein kinase domain occupies 22–278 (YELVKEIGSG…MPEIKNHPWF (257 aa)). ATP-binding positions include 28 to 36 (IGSGNFGVA) and Lys-51. Asp-141 serves as the catalytic Proton acceptor.

This sequence belongs to the protein kinase superfamily. Ser/Thr protein kinase family. As to quaternary structure, interacts with BZIP46. Post-translationally, may be phosphorylated. As to expression, expressed in leaf sheaths and roots. Expressed in shoots of young seedlings.

Its subcellular location is the cytoplasm. It localises to the nucleus. It carries out the reaction L-seryl-[protein] + ATP = O-phospho-L-seryl-[protein] + ADP + H(+). The catalysed reaction is L-threonyl-[protein] + ATP = O-phospho-L-threonyl-[protein] + ADP + H(+). Its activity is regulated as follows. Activated by hyperosmotic stress and abscisic acid (ABA). In terms of biological role, may play a role in signal transduction of hyperosmotic response. Can phosphorylate BZIP46 in vitro. This is Serine/threonine-protein kinase SAPK9 (SAPK9) from Oryza sativa subsp. japonica (Rice).